The primary structure comprises 936 residues: General transcription factor II-I repeat domain-containing protein 2 (936 aa).

One copy of the GTF2I-like 1 repeat lies at 95 to 189 (EACPGEAQLL…FLGAESQLGG (95 aa)). Residues 199–222 (PTVPPNDSYGPVSVKTEPMEDSGT) are disordered. Residues 319 to 413 (LSGLEKIKQL…LPGLELSNVG (95 aa)) form a GTF2I-like 2 repeat.

The protein belongs to the TFII-I family. In terms of tissue distribution, ubiquitous.

The protein resides in the nucleus. This chain is General transcription factor II-I repeat domain-containing protein 2 (Gtf2ird2), found in Mus musculus (Mouse).